A 329-amino-acid polypeptide reads, in one-letter code: Tryptophan--tRNA ligase (329 aa).

Residues 9 to 11 (QPS) and 17 to 18 (GN) each bind ATP. Residues 10-18 (PSGIPTIGN) carry the 'HIGH' region motif. Asp-133 contacts L-tryptophan. ATP is bound by residues 145-147 (GDD), Val-184, and 193-197 (KMSKS). Residues 193–197 (KMSKS) carry the 'KMSKS' region motif.

Belongs to the class-I aminoacyl-tRNA synthetase family. As to quaternary structure, homodimer.

It localises to the cytoplasm. The enzyme catalyses tRNA(Trp) + L-tryptophan + ATP = L-tryptophyl-tRNA(Trp) + AMP + diphosphate + H(+). Catalyzes the attachment of tryptophan to tRNA(Trp). The protein is Tryptophan--tRNA ligase of Staphylococcus epidermidis (strain ATCC 35984 / DSM 28319 / BCRC 17069 / CCUG 31568 / BM 3577 / RP62A).